The sequence spans 1096 residues: Protein EMBRYONIC FLOWER 1 (1096 aa).

Disordered stretches follow at residues 155–189 (KARG…EKLN), 274–296 (KTSG…VRGR), 315–348 (GATS…KGKQ), 366–420 (ETSQ…KKPV), 563–612 (LSRV…DIPM), 629–651 (DKEE…KNAL), 1007–1032 (DKEK…KNSS), and 1070–1096 (FKKK…TQNA). 2 consecutive short sequence motifs (nuclear localization signal) follow at residues 170–177 (SRKLVSPE) and 281–288 (IRKEESAL). The span at 281–294 (IRKEESALKKESVR) shows a compositional bias: basic and acidic residues. Residues 315-337 (GATSENASKSCDSDQGNSESTDS) are compositionally biased toward polar residues. The segment at 337-617 (SGFDRTPFKG…DDIPMEIVEL (281 aa)) is DNA-binding. The span at 371-381 (GIKEHDADPSK) shows a compositional bias: basic and acidic residues. The segment covering 382–394 (RSTPAHSLFTGND) has biased composition (polar residues). Positions 572–601 (SGADRKGKTVMVQEHHGAPRSQSHDRKETT) are enriched in basic and acidic residues. Residues 866–1096 (LDPRLRSTTP…KPVCPPTQNA (231 aa)) form a DNA-binding region. Residues 1018 to 1032 (SCNNNASAGPVKNSS) show a composition bias toward polar residues. A Nuclear localization signal 3 motif is present at residues 1071–1078 (KKKPAVCK).

Interacts with MSI1. As to expression, expressed in mature embryo, root tips, cotyledons, leaves, stems, shoot apex, and flower clusters, with highest levels in flowers. The presence in the shoot apical meristem (SAM) is required to maintain vegetative development and prevent early flowering.

It is found in the nucleus. Transcription repressor that regulates phase transition during shoot, flower and seeds development. Controls leaves development, shoot architecture and flowering by delaying both the vegetative to reproductive transition and flower initiation. Participates in polycomb group (PcG) protein complex-mediated (including EMF2) silencing of the flower homeotic genes AGAMOUS (AG), PISTILLATA (PI), and APETALA3 (AP3), as well as of some regulatory genes such as ABSCISIC ACID INSENSITIVE3 (ABI3), LONG VEGETATIVE PHASE1 (LOV1), and FLOWERING LOCUS C (FLC) during vegetative development. Required for histone methylation or for maintaining a stable histone methylation (e.g. H3K27me3) pattern of repressed target genes (including genes involved in salt stress response and flower development); this repression is counteracted by ULT1. Can bind non specifically DNA (both double- and single-stranded) and RNA. This Arabidopsis thaliana (Mouse-ear cress) protein is Protein EMBRYONIC FLOWER 1.